The sequence spans 564 residues: Mitochondrial distribution and morphology protein 34 (564 aa).

In terms of domain architecture, SMP-LTD spans 1-208 (MAFNFNWSPL…VPEYRDRESE (208 aa)). 5 disordered regions span residues 208–240 (ESVNTLDQSSGPGQDPLASPPQDPVDASGNALN), 336–397 (SGGS…SAPT), 404–423 (QFSEEKNDDPVTPPLAPQND), 434–517 (RISQ…DPRQ), and 532–564 (IQEEKVGPSGSRPFPDFWDDHSREEIPPPAYGH). Residues 209-219 (SVNTLDQSSGP) show a composition bias toward polar residues. The segment covering 351–365 (SGRHPRPHGKKRKKR) has biased composition (basic residues). The span at 366–376 (VVDLRRPKTTD) shows a compositional bias: basic and acidic residues. Low complexity predominate over residues 380–390 (SVSGESVFSSE). Polar residues-rich tracts occupy residues 438–462 (GEHTLTRRSVPSMSEVAQPSSSRNS) and 477–503 (PRNSIRLPSSDRANNPLTTAHLPSSAI).

It belongs to the MDM34 family. As to quaternary structure, component of the ER-mitochondria encounter structure (ERMES) or MDM complex, composed of mmm1, mdm10, mdm12 and mdm34.

It is found in the mitochondrion outer membrane. Functionally, component of the ERMES/MDM complex, which serves as a molecular tether to connect the endoplasmic reticulum (ER) and mitochondria. Components of this complex are involved in the control of mitochondrial shape and protein biogenesis, and function in nonvesicular lipid trafficking between the ER and mitochondria. Mdm34 is required for the interaction of the ER-resident membrane protein mmm1 and the outer mitochondrial membrane-resident beta-barrel protein mdm10. The sequence is that of Mitochondrial distribution and morphology protein 34 from Talaromyces stipitatus (strain ATCC 10500 / CBS 375.48 / QM 6759 / NRRL 1006) (Penicillium stipitatum).